Here is a 371-residue protein sequence, read N- to C-terminus: Chaperone protein DnaJ (371 aa).

In terms of domain architecture, J spans Cys5–Gly70. The CR-type zinc finger occupies Gly127 to Gln204. Zn(2+) is bound by residues Cys140, Cys143, Cys156, Cys159, Cys178, Cys181, Cys192, and Cys195. 4 CXXCXGXG motif repeats span residues Cys140–Gly147, Cys156–Gly163, Cys178–Gly185, and Cys192–Gly199.

The protein belongs to the DnaJ family. As to quaternary structure, homodimer. Zn(2+) serves as cofactor.

The protein resides in the cytoplasm. In terms of biological role, participates actively in the response to hyperosmotic and heat shock by preventing the aggregation of stress-denatured proteins and by disaggregating proteins, also in an autonomous, DnaK-independent fashion. Unfolded proteins bind initially to DnaJ; upon interaction with the DnaJ-bound protein, DnaK hydrolyzes its bound ATP, resulting in the formation of a stable complex. GrpE releases ADP from DnaK; ATP binding to DnaK triggers the release of the substrate protein, thus completing the reaction cycle. Several rounds of ATP-dependent interactions between DnaJ, DnaK and GrpE are required for fully efficient folding. Also involved, together with DnaK and GrpE, in the DNA replication of plasmids through activation of initiation proteins. This chain is Chaperone protein DnaJ, found in Francisella tularensis subsp. holarctica (strain LVS).